The chain runs to 549 residues: Cytoplasmic trehalase (549 aa).

Residues Arg168, 175–176 (WD), Asn212, 221–223 (RSQ), 292–294 (RDE), and Gly324 contribute to the substrate site. Residues Asp326 and Glu509 each act as proton donor/acceptor in the active site. Substrate is bound at residue Glu525.

It belongs to the glycosyl hydrolase 37 family. Monomer.

Its subcellular location is the cytoplasm. It catalyses the reaction alpha,alpha-trehalose + H2O = alpha-D-glucose + beta-D-glucose. It functions in the pathway glycan degradation; trehalose degradation; D-glucose from alpha,alpha-trehalose: step 1/1. Functionally, hydrolyzes trehalose to glucose. Could be involved, in cells returning to low osmolarity conditions, in the utilization of the accumulated cytoplasmic trehalose, which was synthesized in response to high osmolarity. This chain is Cytoplasmic trehalase, found in Salmonella typhi.